A 1170-amino-acid polypeptide reads, in one-letter code: PAN2-PAN3 deadenylation complex catalytic subunit PAN2 (1170 aa).

2 WD repeats span residues Glu-104–Gln-144 and Asn-280–Asp-319. The linker stretch occupies residues Asp-319–Pro-458. Residues Arg-399–Glu-459 are disordered. Positions Val-443–Glu-452 are enriched in acidic residues. The USP domain maps to Glu-459 to Lys-846. The region spanning Val-894–Tyr-1067 is the Exonuclease domain. A divalent metal cation is bound by residues Asp-897, Glu-899, Asp-1006, and Asp-1059. Residues Asn-1094–Lys-1170 form a disordered region. A compositionally biased stretch (basic and acidic residues) spans Pro-1098–Gln-1108. The segment covering Arg-1109 to Pro-1119 has biased composition (polar residues).

This sequence belongs to the peptidase C19 family. PAN2 subfamily. Forms a heterotrimer with an asymmetric homodimer of the regulatory subunit PAN3 to form the poly(A)-nuclease (PAN) deadenylation complex. The cofactor is a divalent metal cation.

The protein localises to the cytoplasm. It catalyses the reaction Exonucleolytic cleavage of poly(A) to 5'-AMP.. Its activity is regulated as follows. Positively regulated by the regulatory subunit PAN3. In terms of biological role, catalytic subunit of the poly(A)-nuclease (PAN) deadenylation complex, one of two cytoplasmic mRNA deadenylases involved in mRNA turnover. PAN specifically shortens poly(A) tails of RNA and the activity is stimulated by poly(A)-binding protein PAB1. PAN deadenylation is followed by rapid degradation of the shortened mRNA tails by the CCR4-NOT complex. Deadenylated mRNAs are then degraded by two alternative mechanisms, namely exosome-mediated 3'-5' exonucleolytic degradation, or deadenylation-dependent mRNA decaping and subsequent 5'-3' exonucleolytic degradation by XRN1. May also be involved in post-transcriptional maturation of mRNA poly(A) tails. This is PAN2-PAN3 deadenylation complex catalytic subunit PAN2 from Chaetomium thermophilum (strain DSM 1495 / CBS 144.50 / IMI 039719) (Thermochaetoides thermophila).